The following is a 384-amino-acid chain: Transcription factor TGA3 (384 aa).

2 disordered regions span residues 36–70 (KSDI…NNRV) and 76–95 (YNNS…EDRI). A compositionally biased stretch (low complexity) spans 39–55 (INNITSNQNNNQSSSTT). The segment covering 58–68 (VDARPEADDNN) has biased composition (basic and acidic residues). Positions 76-88 (YNNSLEAEPSSNN) are enriched in polar residues. The region spanning 96-138 (NDKMKRRLAQNREAARKSRLRKKAHVQQLEESRLKLSQLEQEL) is the bZIP domain. The basic motif stretch occupies residues 98–118 (KMKRRLAQNREAARKSRLRKK). The short motif at 99–106 (MKRRLAQN) is the Nuclear localization signal element. The stretch at 117-144 (KKAHVQQLEESRLKLSQLEQELVRARQQ) forms a coiled coil. The interval 124 to 138 (LEESRLKLSQLEQEL) is leucine-zipper. The 213-residue stretch at 167-379 (IAAFEMEYTH…RALSSLWAAR (213 aa)) folds into the DOG1 domain. Residues K219, R236, and F249 each coordinate hexadecanoate. Residues 267–296 (DQQLLEVRNLQQSSQQAEEALSQGLDKLQQ) are a coiled coil.

This sequence belongs to the bZIP family. Binds DNA as a dimer. Interacts with NPR3, NPR4 and sumoylated NPR1. Interacts with GRXC7/ROXY1. As to expression, expressed in the whole plant.

The protein localises to the nucleus. Its function is as follows. Transcriptional activator that binds specifically to the DNA sequence 5'-TGACG-3'. Recognizes ocs elements like the as-1 motif of the cauliflower mosaic virus 35S promoter. Binding to the as-1-like cis elements mediate auxin- and salicylic acid-inducible transcription. Required to induce the systemic acquired resistance (SAR) via the regulation of pathogenesis-related genes expression. Binding to the as-1 element of PR-1 promoter is salicylic acid-inducible and mediated by sumoylated NPR1. Could also bind to the Hex-motif (5'-TGACGTGG-3') another cis-acting element found in plant histone promoters. The protein is Transcription factor TGA3 of Arabidopsis thaliana (Mouse-ear cress).